Consider the following 350-residue polypeptide: Hydroxymethylglutaryl-CoA synthase (350 aa).

Asp-30 contacts (3S)-3-hydroxy-3-methylglutaryl-CoA. The active-site Proton donor/acceptor is Glu-82. The (3S)-3-hydroxy-3-methylglutaryl-CoA site is built by Cys-114, Ser-155, Thr-203, and His-236. The active-site Acyl-thioester intermediate is Cys-114. His-236 functions as the Proton donor/acceptor in the catalytic mechanism. CoA is bound at residue Arg-241. Residues Arg-245, Asn-268, and Ser-298 each coordinate (3S)-3-hydroxy-3-methylglutaryl-CoA.

The protein belongs to the thiolase-like superfamily. Archaeal HMG-CoA synthase family. In terms of assembly, interacts with acetoacetyl-CoA thiolase that catalyzes the precedent step in the pathway and with a DUF35 protein. The acetoacetyl-CoA thiolase/HMG-CoA synthase complex channels the intermediate via a fused CoA-binding site, which allows for efficient coupling of the endergonic thiolase reaction with the exergonic HMGCS reaction.

The enzyme catalyses acetoacetyl-CoA + acetyl-CoA + H2O = (3S)-3-hydroxy-3-methylglutaryl-CoA + CoA + H(+). The protein operates within metabolic intermediate biosynthesis; (R)-mevalonate biosynthesis; (R)-mevalonate from acetyl-CoA: step 2/3. Its function is as follows. Catalyzes the condensation of acetyl-CoA with acetoacetyl-CoA to form 3-hydroxy-3-methylglutaryl-CoA (HMG-CoA). Functions in the mevalonate (MVA) pathway leading to isopentenyl diphosphate (IPP), a key precursor for the biosynthesis of isoprenoid compounds that are building blocks of archaeal membrane lipids. In Pyrobaculum calidifontis (strain DSM 21063 / JCM 11548 / VA1), this protein is Hydroxymethylglutaryl-CoA synthase.